Consider the following 2151-residue polypeptide: Calpain-type cysteine protease DEK1 (2151 aa).

Positions 1 to 32 (MEGDERGVLLACVISGTLFTVFGSGSFWILWA) are cleaved as a signal peptide. The Extracellular portion of the chain corresponds to 33–69 (VNWRPWRLYSWIFARKWPKVLQGPQLDILCGVLSLFA). A helical membrane pass occupies residues 70–90 (WIVVVSPIAILIGWGSWLIVI). Residues 91 to 94 (LDRH) lie on the Cytoplasmic side of the membrane. Residues 95 to 115 (IIGLAIIMAGTALLLAFYSIM) form a helical membrane-spanning segment. The Extracellular segment spans residues 116-126 (LWWRTQWQSSR). Residues 127 to 147 (AVALLLLLGVALLCAYELCAV) traverse the membrane as a helical segment. Residues 148-163 (YVTAGAHASQQYSPSG) lie on the Cytoplasmic side of the membrane. Residues 164–184 (FFFGVSAIALAINMLFICRMV) form a helical membrane-spanning segment. Over 185–235 (FNGNGLDVDEYVRRAYKFAYSDCIEVGPVACLPEPPDPNELYPRQTSRASH) the chain is Extracellular. Residues 236 to 256 (LGLLYLGSLVVLLAYSVLYGL) form a helical membrane-spanning segment. The Cytoplasmic portion of the chain corresponds to 257–263 (TARESRW). The helical transmembrane segment at 264 to 284 (LGGITSAAVIVLDWNIGACLY) threads the bilayer. Topologically, residues 285–293 (GFKLLQNRV) are extracellular. The chain crosses the membrane as a helical span at residues 294 to 314 (LALFVAGISRLFLICFGIHYW). The Cytoplasmic portion of the chain corresponds to 315 to 319 (YLGHC). Residues 320 to 340 (ISYIFVASVLSGAAVSRHLSI) form a helical membrane-spanning segment. The Extracellular portion of the chain corresponds to 341–615 (TDPSAARRDA…LLLHHVAGTP (275 aa)). Disordered regions lie at residues 363 to 393 (RRKE…GHTG) and 405 to 442 (CTAD…SCRS). Residues 369–388 (SSSSSSDGCGSSIKRSSSID) show a composition bias toward low complexity. Residues 405–420 (CTADNLTRTGSSQEGI) are compositionally biased toward polar residues. A compositionally biased stretch (low complexity) spans 430 to 442 (RPSLGLRSSSCRS). Residues 616–636 (ERAWGLFSLVFILETIIVAIF) traverse the membrane as a helical segment. Over 637–652 (RPKTITIINSSHQQFE) the chain is Cytoplasmic. Residues 653 to 673 (FGFSVLLLSPVVCSIMAFLRS) form a helical membrane-spanning segment. Residues 674–686 (LQVEEMALTSKSR) are Extracellular-facing. A helical membrane pass occupies residues 687-707 (KYGFVAWLLSTSVGLSLSFLS). The Cytoplasmic portion of the chain corresponds to 708-711 (KSSV). Residues 712–732 (LLGISLTVPLMAACLSIAVPI) traverse the membrane as a helical segment. Residues 733 to 760 (WMHNGYQFWVPQLSCGDQARDLRSPRIK) lie on the Extracellular side of the membrane. A helical transmembrane segment spans residues 761-782 (GFILWICVVLFAGSVISLGAII). The Cytoplasmic segment spans residues 783-813 (SAKPLDDLKYKLFSARENNVTSPYTSSVYLG). The helical transmembrane segment at 814-834 (WAMSSGIALVVTAILPIVSWF) threads the bilayer. At 835–844 (ATYRFSHSSA) the chain is on the extracellular side. Residues 845 to 865 (VCLMIFSVVLVAFCGTSYLEV) traverse the membrane as a helical segment. Residues 866 to 878 (VKSRDDQLPTKGD) are Cytoplasmic-facing. The helical transmembrane segment at 879–899 (FLAALLPLACIPALLSLCCGM) threads the bilayer. The Extracellular segment spans residues 900–912 (VKWKDDCWILSRG). A helical membrane pass occupies residues 913–933 (VYVFFSIGLLLLFGAIAAVIA). Residues 934-936 (VKP) are Cytoplasmic-facing. The chain crosses the membrane as a helical span at residues 937-957 (WTIGVSFLLVLFLMVVTIGVI). The Extracellular portion of the chain corresponds to 958–971 (HLWASNNFYLTRKQ). The chain crosses the membrane as a helical span at residues 972–992 (TSFVCFLALLLGLAAFLLGWH). The Cytoplasmic segment spans residues 993–1006 (QDKAFAGASVGYFT). Residues 1007 to 1027 (FLSLLAGRALAVLLSPPIVVY) traverse the membrane as a helical segment. Residues 1028–1050 (SPRVLPVYVYDAHADCGKNVSAA) are Extracellular-facing. A helical membrane pass occupies residues 1051-1071 (FLVLYGIALATEGWGVVASLI). Residues 1072–2151 (IYPPFAGAAV…TKASIVLEAL (1080 aa)) lie on the Cytoplasmic side of the membrane. Calpain catalytic domains lie at 1407–1600 (SGKH…DMID) and 1695–1997 (QFTD…CRVY). Residues C1761, H1919, and N1939 contribute to the active site.

This sequence belongs to the peptidase C2 family. Autocatalytic proteolytic cleavage leading to the production of mainly cytoplasmic localized subproducts of about 85 and 120 kDa. As to expression, mostly expressed in meristems and organ primordia. Expressed at low levels in young and germinating seeds at 10 ppm and in seedling roots at 67 ppm. Present in most tissues at a low level.

Its subcellular location is the cell membrane. The protein resides in the endosome membrane. The protein localises to the endoplasmic reticulum membrane. It is found in the cytoplasm. Its function is as follows. Essential protease involved in epiderm development. Required for aleurone cell development in the endosperm probably by maintaining and restricting the aleurone and embryonic epidermal L1 cell-layer fates as well as meristems organization. Involved in the maintenance of adaxial/abaxial axis information in developing leaves, probably by regulating cell proliferation and expansion. Does not need calcium ions to be active. Required for the formation of giant cells in sepals by determining cell fate and promoting endoreplication. The sequence is that of Calpain-type cysteine protease DEK1 from Arabidopsis thaliana (Mouse-ear cress).